The sequence spans 397 residues: Acetate kinase (397 aa).

Asn7 is a binding site for Mg(2+). Lys14 is an ATP binding site. Residue Arg91 participates in substrate binding. Asp147 functions as the Proton donor/acceptor in the catalytic mechanism. Residues 207–211 (HLGNG), 282–284 (DFR), and 330–334 (GLGEN) each bind ATP. Glu383 contacts Mg(2+).

Belongs to the acetokinase family. Homodimer. Requires Mg(2+) as cofactor. It depends on Mn(2+) as a cofactor.

The protein localises to the cytoplasm. It catalyses the reaction acetate + ATP = acetyl phosphate + ADP. The protein operates within metabolic intermediate biosynthesis; acetyl-CoA biosynthesis; acetyl-CoA from acetate: step 1/2. In terms of biological role, catalyzes the formation of acetyl phosphate from acetate and ATP. Can also catalyze the reverse reaction. The chain is Acetate kinase from Moorella thermoacetica (strain ATCC 39073 / JCM 9320).